The primary structure comprises 489 residues: L-asparagine permease 1 (489 aa).

12 helical membrane passes run 25–45 (QLQM…GAGG), 49–69 (KAGP…FLIL), 100–120 (AVGW…TTAI), 137–157 (ILAL…VEWF), 162–182 (FWAA…GTVF), 210–230 (WLPL…VELV), 255–275 (IAIF…YTAY), 289–309 (IGFH…ALSS), 344–364 (YGGI…NAFK), 369–389 (FEIV…TIVL), 413–433 (SPYS…TMAS), and 439–459 (TWTV…WYLV).

This sequence belongs to the amino acid-polyamine-organocation (APC) superfamily. Amino acid transporter (AAT) (TC 2.A.3.1) family.

It is found in the cell membrane. This chain is L-asparagine permease 1 (ansP1), found in Mycobacterium tuberculosis (strain CDC 1551 / Oshkosh).